Here is a 512-residue protein sequence, read N- to C-terminus: Monocarboxylate transporter 10 (512 aa).

The interval 1-44 is disordered; the sequence is MVPSQEEPAAERETNEAQPPGPAPSDDAPLPGPGPSDVSDVAAE. Residues 1–63 are Cytoplasmic-facing; it reads MVPSQEEPAA…AGSEPPVPPE (63 aa). The chain crosses the membrane as a helical span at residues 64–84; that stretch reads GGWGWLVMLAAMWCNGSVFGI. The Extracellular portion of the chain corresponds to 85–111; sequence QNAYGVLFVSMLDTFKAKDDDNMAFKT. The helical transmembrane segment at 112 to 132 threads the bilayer; the sequence is AWVGSLSMGMIFFCCPIVSVF. Topologically, residues 133 to 141 are cytoplasmic; it reads TDMFGCRRT. A helical transmembrane segment spans residues 142–162; it reads AVVGAAVGFIGLMSSSFVSSI. Over 163-168 the chain is Extracellular; the sequence is EPLYLT. The chain crosses the membrane as a helical span at residues 169–189; it reads YGIIFACGCSFAYQPSLVILG. At 190-201 the chain is on the cytoplasmic side; sequence HYFKKRLGLVNG. A helical membrane pass occupies residues 202–222; the sequence is IVTAGSSVFTILLPLLLGNLI. Residues 223 to 232 lie on the Extracellular side of the membrane; sequence SSVKLFNTLR. Residues 233-253 form a helical membrane-spanning segment; the sequence is ILCIFMFVLFLAGFTYRPLVP. The Cytoplasmic segment spans residues 254-291; that stretch reads STKEKESGGSRSSFFSRRKLSPPKKVFNFALFKETTYA. Position 260 is a phosphoserine (Ser260). Residues 292-312 traverse the membrane as a helical segment; sequence VWAAGIPLALFGYFVPYVHLM. Topologically, residues 313–326 are extracellular; that stretch reads NHVKERFQDVNNKE. Residues 327–347 traverse the membrane as a helical segment; it reads VLFMCIGITSGVGRLLFGRIA. The Cytoplasmic portion of the chain corresponds to 348-362; the sequence is DYLPGVKKVYLQVLS. Residues 363 to 383 form a helical membrane-spanning segment; it reads FFFIGLMSMMIPLCSAFGALI. A topological domain (extracellular) is located at residue Ala384. Residues 385-405 form a helical membrane-spanning segment; that stretch reads VCLAMGLFDGCFISIMAPIAF. Residues 406–416 are Cytoplasmic-facing; the sequence is ELVGPQDASQA. A helical membrane pass occupies residues 417-437; the sequence is IGFLLGFMSIPMTVGPPIAGL. The Extracellular segment spans residues 438–448; it reads LHDKLGTYDVA. A helical membrane pass occupies residues 449-469; sequence FYLAGIPPFVGGVVLCLIPWI. The Cytoplasmic portion of the chain corresponds to 470 to 512; sequence HSKKQRKISKNAGGEKMEKMLENQSSLLSGSSGIFKKDSASII. A phosphoserine mark is found at Ser495, Ser498, Ser500, and Ser501.

It belongs to the major facilitator superfamily. Monocarboxylate porter (TC 2.A.1.13) family. In terms of processing, not N-glycosylated. Highly expressed in small intestine, particularly in jejunum and ileum, scarcely in colon and substantially in kidney, liver and skeletal muscle. In the brain expression is low and appears to be restricted to a subset of neurons, microglia cells, and oligodendrocytes.

It localises to the cell membrane. It is found in the basolateral cell membrane. It catalyses the reaction L-tryptophan(in) = L-tryptophan(out). It carries out the reaction L-tyrosine(in) = L-tyrosine(out). The enzyme catalyses L-phenylalanine(in) = L-phenylalanine(out). The catalysed reaction is 3,3',5-triiodo-L-thyronine(out) = 3,3',5-triiodo-L-thyronine(in). It catalyses the reaction L-thyroxine(out) = L-thyroxine(in). Its function is as follows. Sodium- and proton-independent thyroid hormones and aromatic acids transporter. Mediates both uptake and efflux of 3,5,3'-triiodothyronine (T3) and 3,5,3',5'-tetraiodothyronine (T4) with high affinity, suggesting a role in the homeostasis of thyroid hormone levels. Responsible for low affinity bidirectional transport of the aromatic amino acids, such as phenylalanine, tyrosine, tryptophan and L-3,4-dihydroxyphenylalanine (L-dopa). Plays an important role in homeostasis of aromatic amino acids. The sequence is that of Monocarboxylate transporter 10 (Slc16a10) from Mus musculus (Mouse).